We begin with the raw amino-acid sequence, 716 residues long: Probable calcium-binding mitochondrial carrier K02F3.2 (716 aa).

The tract at residues 1 to 345 (MSFDHLLTSS…CLKDIQAIDP (345 aa)) is N-terminal domain. EF-hand domains lie at 93-121 (YNKETVRLLASAADTTKDGDISFEEFCAF), 127-162 (SPDALYLTAFELFDRNASDTISCDEFEAVIRHTQPL), 165-195 (QDFDFSSEFIKRYFGADKQRNVNYHSFCQLL), and 198-233 (FYEEQGIQAFKRYDKNGNGTISSLDFQQIMTTVKGH). The Ca(2+) site is built by Asp-106, Thr-108, Asp-110, Glu-117, Asp-140, Asn-142, Ser-144, Thr-146, and Glu-151. Asp-211, Asn-213, Asn-215, Thr-217, and Asp-222 together coordinate Ca(2+). Residues 346–362 (ERLKRVSQMDRLINIKA) are linker loop domain. A carrier domain region spans residues 372 to 664 (GTAFLESAYR…RLFYVDFAGS (293 aa)). Solcar repeat units lie at residues 376–468 (LESA…MRDK), 475–560 (IPLY…AKLA), and 568–656 (NSPG…LQRL). 6 consecutive transmembrane segments (helical) span residues 382–399 (FLLGSVAGACGATAVYPI), 443–462 (GLLPQIVGVAPEKAIKLTMN), 485–498 (GTGGMCQVVFTNPL), 535–554 (GSRACFLRDIPFSAIYFPAY), 574–591 (FASAFIAGVPAAGLVTPA), and 631–650 (GTAARVCRSSPQFAVTLLTY). The tract at residues 665-716 (RPTGSELATTKTIQDESSTNPDHVGGYKLAAATFSGIEHKFGLFLPKFETSK) is C-terminal domain.

Belongs to the mitochondrial carrier (TC 2.A.29) family. Homodimer (via N-terminus).

The protein localises to the mitochondrion inner membrane. Mitochondrial and calcium-binding carrier that catalyzes the calcium-dependent exchange of cytoplasmic glutamate with mitochondrial aspartate across the mitochondrial inner membrane. The polypeptide is Probable calcium-binding mitochondrial carrier K02F3.2 (Caenorhabditis elegans).